The following is a 353-amino-acid chain: Photosystem II D2 protein (353 aa).

At Thr2 the chain carries N-acetylthreonine. Phosphothreonine is present on Thr2. A helical membrane pass occupies residues 41-61 (CAYFALGGWFTGTTFVTSWYT). Residue His118 participates in chlorophyll a binding. A helical transmembrane segment spans residues 125 to 141 (GFMLRQFELARSVQLRP). The pheophytin a site is built by Gln130 and Asn143. A helical transmembrane segment spans residues 153–166 (VFVSVFLIYPLGQS). His198 is a chlorophyll a binding site. Residues 208–228 (AALLCAIHGATVENTLFEDGD) traverse the membrane as a helical segment. A plastoquinone is bound by residues His215 and Phe262. His215 contributes to the Fe cation binding site. Residue His269 coordinates Fe cation. A helical transmembrane segment spans residues 279 to 295 (GLWMSAIGVVGLALNLR).

Belongs to the reaction center PufL/M/PsbA/D family. PSII is composed of 1 copy each of membrane proteins PsbA, PsbB, PsbC, PsbD, PsbE, PsbF, PsbH, PsbI, PsbJ, PsbK, PsbL, PsbM, PsbT, PsbX, PsbY, PsbZ, Psb30/Ycf12, at least 3 peripheral proteins of the oxygen-evolving complex and a large number of cofactors. It forms dimeric complexes. The D1/D2 heterodimer binds P680, chlorophylls that are the primary electron donor of PSII, and subsequent electron acceptors. It shares a non-heme iron and each subunit binds pheophytin, quinone, additional chlorophylls, carotenoids and lipids. There is also a Cl(-1) ion associated with D1 and D2, which is required for oxygen evolution. The PSII complex binds additional chlorophylls, carotenoids and specific lipids. is required as a cofactor. Post-translationally, phosphorylated on threonine residue(s); phosphorylation increases with increasing light levels.

The protein resides in the plastid. It localises to the chloroplast thylakoid membrane. It catalyses the reaction 2 a plastoquinone + 4 hnu + 2 H2O = 2 a plastoquinol + O2. Its function is as follows. Photosystem II (PSII) is a light-driven water:plastoquinone oxidoreductase that uses light energy to abstract electrons from H(2)O, generating O(2) and a proton gradient subsequently used for ATP formation. It consists of a core antenna complex that captures photons, and an electron transfer chain that converts photonic excitation into a charge separation. The D1/D2 (PsbA/PsbD) reaction center heterodimer binds P680, the primary electron donor of PSII as well as several subsequent electron acceptors. D2 is needed for assembly of a stable PSII complex. The polypeptide is Photosystem II D2 protein (Marchantia polymorpha (Common liverwort)).